We begin with the raw amino-acid sequence, 427 residues long: Gamma-glutamyl phosphate reductase (427 aa).

The protein belongs to the gamma-glutamyl phosphate reductase family.

Its subcellular location is the cytoplasm. The catalysed reaction is L-glutamate 5-semialdehyde + phosphate + NADP(+) = L-glutamyl 5-phosphate + NADPH + H(+). It participates in amino-acid biosynthesis; L-proline biosynthesis; L-glutamate 5-semialdehyde from L-glutamate: step 2/2. Functionally, catalyzes the NADPH-dependent reduction of L-glutamate 5-phosphate into L-glutamate 5-semialdehyde and phosphate. The product spontaneously undergoes cyclization to form 1-pyrroline-5-carboxylate. The protein is Gamma-glutamyl phosphate reductase of Rhizobium etli (strain CIAT 652).